A 217-amino-acid chain; its full sequence is 3,4-dihydroxy-2-butanone 4-phosphate synthase (217 aa).

Residues 37–38, aspartate 42, 150–154, and glutamate 174 contribute to the D-ribulose 5-phosphate site; these read RE and RRGHT. Residue glutamate 38 participates in Mg(2+) binding. Histidine 153 contacts Mg(2+).

This sequence belongs to the DHBP synthase family. As to quaternary structure, homodimer. The cofactor is Mg(2+). It depends on Mn(2+) as a cofactor.

It carries out the reaction D-ribulose 5-phosphate = (2S)-2-hydroxy-3-oxobutyl phosphate + formate + H(+). It participates in cofactor biosynthesis; riboflavin biosynthesis; 2-hydroxy-3-oxobutyl phosphate from D-ribulose 5-phosphate: step 1/1. Catalyzes the conversion of D-ribulose 5-phosphate to formate and 3,4-dihydroxy-2-butanone 4-phosphate. The sequence is that of 3,4-dihydroxy-2-butanone 4-phosphate synthase from Pseudoalteromonas translucida (strain TAC 125).